The primary structure comprises 502 residues: Probable glycine dehydrogenase (decarboxylating) subunit 2 (502 aa).

An N6-(pyridoxal phosphate)lysine modification is found at Lys-273.

It belongs to the GcvP family. C-terminal subunit subfamily. The glycine cleavage system is composed of four proteins: P, T, L and H. In this organism, the P 'protein' is a heterodimer of two subunits. Requires pyridoxal 5'-phosphate as cofactor.

The enzyme catalyses N(6)-[(R)-lipoyl]-L-lysyl-[glycine-cleavage complex H protein] + glycine + H(+) = N(6)-[(R)-S(8)-aminomethyldihydrolipoyl]-L-lysyl-[glycine-cleavage complex H protein] + CO2. In terms of biological role, the glycine cleavage system catalyzes the degradation of glycine. The P protein binds the alpha-amino group of glycine through its pyridoxal phosphate cofactor; CO(2) is released and the remaining methylamine moiety is then transferred to the lipoamide cofactor of the H protein. The chain is Probable glycine dehydrogenase (decarboxylating) subunit 2 from Thermococcus kodakarensis (strain ATCC BAA-918 / JCM 12380 / KOD1) (Pyrococcus kodakaraensis (strain KOD1)).